The chain runs to 199 residues: GTP cyclohydrolase-2 (199 aa).

A GTP-binding site is contributed by 49 to 53 (RIHSE). Residues Cys54, Cys65, and Cys67 each contribute to the Zn(2+) site. Residues Gln70, 92 to 94 (EGR), and Thr114 contribute to the GTP site. The active-site Proton acceptor is Asp126. The active-site Nucleophile is Arg128. GTP-binding residues include Thr149 and Lys154.

Belongs to the GTP cyclohydrolase II family. As to quaternary structure, homodimer. Zn(2+) serves as cofactor.

The enzyme catalyses GTP + 4 H2O = 2,5-diamino-6-hydroxy-4-(5-phosphoribosylamino)-pyrimidine + formate + 2 phosphate + 3 H(+). It participates in cofactor biosynthesis; riboflavin biosynthesis; 5-amino-6-(D-ribitylamino)uracil from GTP: step 1/4. Its function is as follows. Catalyzes the conversion of GTP to 2,5-diamino-6-ribosylamino-4(3H)-pyrimidinone 5'-phosphate (DARP), formate and pyrophosphate. This chain is GTP cyclohydrolase-2, found in Proteus mirabilis (strain HI4320).